Reading from the N-terminus, the 153-residue chain is Pheromone-binding protein Gp-9 (153 aa).

The first 19 residues, 1 to 19 (MKTFVLHIFIFALVAFASA), serve as a signal peptide directing secretion. 3 cysteine pairs are disulfide-bonded: cysteine 37–cysteine 77, cysteine 73–cysteine 129, and cysteine 118–cysteine 138.

Belongs to the PBP/GOBP family. Homodimer.

The protein localises to the secreted. Its function is as follows. Colony queen number, a major feature of social organization, is associated with worker genotype for Gp-9. Colonies are headed by either a single reproductive queen (monogyne form) or multiple queens (polygyne form). Differences in worker Gp-9 genotypes between social forms may cause differences in workers' abilities to recognize queens and regulate their numbers. This chain is Pheromone-binding protein Gp-9, found in Solenopsis pusillignis (Fire ant).